Consider the following 865-residue polypeptide: AdoMet-dependent rRNA methyltransferase SPB1 (865 aa).

S-adenosyl-L-methionine contacts are provided by G56, W58, D76, D92, and D117. The active-site Proton acceptor is K157. 2 coiled-coil regions span residues 358 to 400 and 462 to 492; these read ESMD…VRMQ and GETD…RKAA. Disordered stretches follow at residues 370–396 and 443–676; these read LEKL…QKDI and VVAS…TKDG. Residues 386–396 are compositionally biased toward basic and acidic residues; the sequence is RKENERKQKDI. A compositionally biased stretch (acidic residues) spans 463-483; that stretch reads ETDDESDEELDRLETELDDMY. The segment covering 484-497 has biased composition (basic and acidic residues); that stretch reads DQFRERKAASDAKY. The segment covering 526–545 has biased composition (acidic residues); it reads ISDDSELEEESSGDSDDEDD. Over residues 556 to 566 the composition is skewed to polar residues; sequence LDTTPSDNSGL. Acidic residues predominate over residues 600–609; it reads GEDEDADMED. 2 stretches are compositionally biased toward basic and acidic residues: residues 610–627 and 659–676; these read TVSK…ADKK and KSGK…TKDG. Residues 762–789 adopt a coiled-coil conformation; sequence REAKGRKKMKAAQRLEKLKKKSDLLVNE.

This sequence belongs to the class I-like SAM-binding methyltransferase superfamily. RNA methyltransferase RlmE family. SPB1 subfamily. As to quaternary structure, component of the nucleolar and nucleoplasmic pre-60S ribosomal particle.

Its subcellular location is the nucleus. The protein localises to the nucleolus. It catalyses the reaction a ribonucleotide in rRNA + S-adenosyl-L-methionine = a 2'-O-methylribonucleotide in rRNA + S-adenosyl-L-homocysteine + H(+). In terms of biological role, required for proper assembly of pre-ribosomal particles during the biogenesis of the 60S ribosomal subunit. This chain is AdoMet-dependent rRNA methyltransferase SPB1, found in Pyricularia oryzae (strain 70-15 / ATCC MYA-4617 / FGSC 8958) (Rice blast fungus).